Reading from the N-terminus, the 166-residue chain is EndA-like protein (166 aa).

This sequence belongs to the tRNA-intron endonuclease family. Archaeal short subfamily.

The sequence is that of EndA-like protein from Methanopyrus kandleri (strain AV19 / DSM 6324 / JCM 9639 / NBRC 100938).